The sequence spans 357 residues: Peptide chain release factor 1 (357 aa).

Q236 carries the post-translational modification N5-methylglutamine.

Belongs to the prokaryotic/mitochondrial release factor family. In terms of processing, methylated by PrmC. Methylation increases the termination efficiency of RF1.

It is found in the cytoplasm. Peptide chain release factor 1 directs the termination of translation in response to the peptide chain termination codons UAG and UAA. The protein is Peptide chain release factor 1 of Mycolicibacterium paratuberculosis (strain ATCC BAA-968 / K-10) (Mycobacterium paratuberculosis).